The primary structure comprises 448 residues: Deoxyguanosinetriphosphate triphosphohydrolase-like protein (448 aa).

The HD domain maps to 67–260 (RLTHSLEVSQ…MELADDIAYG (194 aa)).

Belongs to the dGTPase family. Type 2 subfamily.

This Aliivibrio fischeri (strain ATCC 700601 / ES114) (Vibrio fischeri) protein is Deoxyguanosinetriphosphate triphosphohydrolase-like protein.